The chain runs to 175 residues: Translation initiation factor IF-3 (175 aa).

The protein belongs to the IF-3 family. Monomer.

It localises to the cytoplasm. Its function is as follows. IF-3 binds to the 30S ribosomal subunit and shifts the equilibrium between 70S ribosomes and their 50S and 30S subunits in favor of the free subunits, thus enhancing the availability of 30S subunits on which protein synthesis initiation begins. This Staphylococcus aureus (strain USA300) protein is Translation initiation factor IF-3.